Here is a 355-residue protein sequence, read N- to C-terminus: GTP 3',8-cyclase (355 aa).

In terms of domain architecture, Radical SAM core spans 16-242 (RYGRRATDMR…PDPRARDGAP (227 aa)). Arg-25 serves as a coordination point for GTP. [4Fe-4S] cluster-binding residues include Cys-32 and Cys-36. Tyr-38 serves as a coordination point for S-adenosyl-L-methionine. Residue Cys-39 coordinates [4Fe-4S] cluster. Arg-76 lines the GTP pocket. Gly-80 is an S-adenosyl-L-methionine binding site. GTP is bound at residue Thr-107. Residue Ser-131 coordinates S-adenosyl-L-methionine. Lys-168 serves as a coordination point for GTP. An S-adenosyl-L-methionine-binding site is contributed by Met-202. The [4Fe-4S] cluster site is built by Cys-277 and Cys-280. 282–284 (RTR) is a binding site for GTP. Position 294 (Cys-294) interacts with [4Fe-4S] cluster.

The protein belongs to the radical SAM superfamily. MoaA family. As to quaternary structure, monomer. Requires [4Fe-4S] cluster as cofactor.

It carries out the reaction GTP + AH2 + S-adenosyl-L-methionine = (8S)-3',8-cyclo-7,8-dihydroguanosine 5'-triphosphate + 5'-deoxyadenosine + L-methionine + A + H(+). Its pathway is cofactor biosynthesis; molybdopterin biosynthesis. Functionally, catalyzes, together with MoaC, the conversion of 5'-GTP to cyclic pyranopterin monophosphate (cPMP or molybdopterin precursor Z). In terms of biological role, catalyzes the cyclization of GTP to (8S)-3',8-cyclo-7,8-dihydroguanosine 5'-triphosphate. The chain is GTP 3',8-cyclase from Paenarthrobacter nicotinovorans (Arthrobacter nicotinovorans).